A 522-amino-acid chain; its full sequence is Zinc finger and BTB domain-containing protein 18 (522 aa).

The BTB domain occupies 24–91 (CDCTVLVGDA…MYEGKLQFKD (68 aa)). Residues 121–143 (ATTEADSTKKEEDASSCSDKVES) show a composition bias toward basic and acidic residues. The segment at 121–166 (ATTEADSTKKEEDASSCSDKVESLSDGSSHMAGDLPSDEDEGEDDK) is disordered. The residue at position 157 (Ser-157) is a Phosphoserine. Lys-273 is covalently cross-linked (Glycyl lysine isopeptide (Lys-Gly) (interchain with G-Cter in SUMO2)). An interaction with DNMT3A region spans residues 310–427 (EPAHLAPLRE…TFSCMYTLKR (118 aa)). C2H2-type zinc fingers lie at residues 370-392 (FMCP…LSTH), 410-432 (PTCS…ERTH), 438-460 (YTCT…AVVH), and 466-489 (HACK…RKFH). Phosphoserine is present on residues Ser-516 and Ser-517.

It belongs to the krueppel C2H2-type zinc-finger protein family. ZBTB18 subfamily. In terms of assembly, interacts with DNMT3A.

It localises to the nucleus. In terms of biological role, transcriptional repressor that plays a role in various developmental processes such as myogenesis and brain development. Specifically binds the consensus DNA sequence 5'-[AC]ACATCTG[GT][AC]-3' which contains the E box core, and acts by recruiting chromatin remodeling multiprotein complexes. Plays a key role in myogenesis by directly repressing the expression of ID2 and ID3, 2 inhibitors of skeletal myogenesis. Also involved in controlling cell division of progenitor cells and regulating the survival of postmitotic cortical neurons. May also play a role in the organization of chromosomes in the nucleus. The protein is Zinc finger and BTB domain-containing protein 18 (Zbtb18) of Rattus norvegicus (Rat).